The primary structure comprises 423 residues: Large ribosomal subunit protein mL37 (423 aa).

A mitochondrion-targeting transit peptide spans 1–29 (MALASGPARRALAGSGQLGLGGFGAPRRG).

This sequence belongs to the mitochondrion-specific ribosomal protein mL37 family. Component of the mitochondrial large ribosomal subunit (mt-LSU). Mature mammalian 55S mitochondrial ribosomes consist of a small (28S) and a large (39S) subunit. The 28S small subunit contains a 12S ribosomal RNA (12S mt-rRNA) and 30 different proteins. The 39S large subunit contains a 16S rRNA (16S mt-rRNA), a copy of mitochondrial valine transfer RNA (mt-tRNA(Val)), which plays an integral structural role, and 52 different proteins. mL37 forms a heterodimer with mL65.

Its subcellular location is the mitochondrion. The sequence is that of Large ribosomal subunit protein mL37 (MRPL37) from Homo sapiens (Human).